The chain runs to 459 residues: tRNA modification GTPase MnmE (459 aa).

Residues Arg-20, Glu-85, and Arg-124 each coordinate (6S)-5-formyl-5,6,7,8-tetrahydrofolate. The TrmE-type G domain occupies 221–380; sequence GLSTVIIGRP…LEMAIQSLFF (160 aa). Asn-231 contacts K(+). GTP contacts are provided by residues 231–236, 250–256, and 275–278; these read NVGKSS, TDIPGTT, and DTAG. Ser-235 is a binding site for Mg(2+). The K(+) site is built by Thr-250, Ile-252, and Thr-255. A Mg(2+)-binding site is contributed by Thr-256. Residue Lys-459 participates in (6S)-5-formyl-5,6,7,8-tetrahydrofolate binding.

The protein belongs to the TRAFAC class TrmE-Era-EngA-EngB-Septin-like GTPase superfamily. TrmE GTPase family. In terms of assembly, homodimer. Heterotetramer of two MnmE and two MnmG subunits. K(+) is required as a cofactor.

It is found in the cytoplasm. Functionally, exhibits a very high intrinsic GTPase hydrolysis rate. Involved in the addition of a carboxymethylaminomethyl (cmnm) group at the wobble position (U34) of certain tRNAs, forming tRNA-cmnm(5)s(2)U34. In Bacillus pumilus (strain SAFR-032), this protein is tRNA modification GTPase MnmE.